Reading from the N-terminus, the 225-residue chain is MADEDISLNEDQLLESMEETNGEQETEIVTETEEEGSMQIDPELEAIKARVKEMEEEAEKIKQMQSEVDKQMAGGSTTGLAAVPLSLEEKQEIDTRSVYVGNVDYGASAEELEAHFHGCGTINRVTILCNKADGHPKGFAYIEFGSKEFVETALAMNETLFRGRQIKVMSKRTNRPGLSTTNRFARGSFRGRGARASRACCHSTFRGARRAIRGYRGRANYYAPY.

Residues 1 to 36 show a composition bias toward acidic residues; sequence MADEDISLNEDQLLESMEETNGEQETEIVTETEEEG. Residues 1-42 form a disordered region; the sequence is MADEDISLNEDQLLESMEETNGEQETEIVTETEEEGSMQIDP. The stretch at 14–74 forms a coiled coil; it reads LESMEETNGE…QSEVDKQMAG (61 aa). An RRM domain is found at 96-173; the sequence is RSVYVGNVDY…RQIKVMSKRT (78 aa).

The protein resides in the nucleus. It localises to the cytoplasm. Its function is as follows. Involved in the 3'-end formation of mRNA precursors (pre-mRNA) by the addition of a poly(A) tail of 200-250 nt to the upstream cleavage product. Stimulates poly(A) polymerase (PAPOLA) conferring processivity on the poly(A) tail elongation reaction and also controls the poly(A) tail length. Increases the affinity of poly(A) polymerase for RNA. Binds to poly(A) and to poly(G) with high affinity. May protect the poly(A) tail from degradation. In Drosophila pseudoobscura pseudoobscura (Fruit fly), this protein is Polyadenylate-binding protein 2.